A 485-amino-acid polypeptide reads, in one-letter code: Pelle-like serine/threonine-protein kinase pik-1 (485 aa).

Residues 115 to 132 (TSRVSKQMVQPPGSQSAS) are compositionally biased toward polar residues. The segment at 115–155 (TSRVSKQMVQPPGSQSASRLKKTEIKESSPSPAAAAASQLS) is disordered. Over residues 142–152 (SSPSPAAAAAS) the composition is skewed to low complexity. The Protein kinase domain maps to 185–485 (FAVSNVIGKG…LCKNSIPPVV (301 aa)). ATP contacts are provided by residues 191-199 (IGKGGYGTV) and lysine 214. Residue aspartate 318 is the Proton acceptor of the active site.

This sequence belongs to the protein kinase superfamily. TKL Ser/Thr protein kinase family. Pelle subfamily. As to quaternary structure, interacts with actl-1. Expressed in the nervous system.

The enzyme catalyses L-seryl-[protein] + ATP = O-phospho-L-seryl-[protein] + ADP + H(+). It catalyses the reaction L-threonyl-[protein] + ATP = O-phospho-L-threonyl-[protein] + ADP + H(+). In terms of biological role, through association with the adapter actl-1, may act downstream of the receptor complex composed of ilcr-1 and ilcr-2, which is a signaling complex that modulates neuronal activity and animal behavior in response to sensory neuron input. This Caenorhabditis elegans protein is Pelle-like serine/threonine-protein kinase pik-1.